The primary structure comprises 400 residues: MNPASVPPALPPPGQQVIHVTQDLDTDLEALFNSVMNPKPSSWRKKILPESFFKEPDSGSHSRQSSTDSSGGHAGPRLAGGAQHVRSHSSPASLQLGPGAGAAGSPAQQHAHLRQQSYDVTDELPLPPGWEMTFTATGQRYFLNHIEKITTWQDPRKAMNQSLNPMNLHPAATSTPASQRSMAVSQPNLVMNHQHQQQMAPTNLSQQNHPTQNPPAGLMSMPNALTTQQQQQQKLRLQRIQMERERIRMRQEELMRQEAALCRQLPMEAETLATVQAAVNPPAMTPDMRSITNNSSDPFLNGGPYHSREQSTDSGLGLGCYSVPTTPEDFLSNVDEMDTGENAGQTPMNINPQQTRFPDFLDCLPGTNVDLGTLESEDLIPLFNDVESALNKSEPFLTWL.

A Glycyl lysine isopeptide (Lys-Gly) (interchain with G-Cter in ubiquitin) cross-link involves residue lysine 46. The interval 52 to 117 is disordered; sequence FFKEPDSGSH…QQHAHLRQQS (66 aa). A compositionally biased stretch (polar residues) spans 61 to 70; that stretch reads HSRQSSTDSS. Phosphoserine occurs at positions 62 and 89. Residues 91–110 are compositionally biased toward low complexity; it reads PASLQLGPGAGAAGSPAQQH. Positions 124–157 constitute a WW domain; that stretch reads LPLPPGWEMTFTATGQRYFLNHIEKITTWQDPRK. Positions 192–211 are enriched in polar residues; sequence NHQHQQQMAPTNLSQQNHPT. The interval 192–216 is disordered; it reads NHQHQQQMAPTNLSQQNHPTQNPPA. The interval 222-400 is required for interaction with PALS1; it reads PNALTTQQQQ…NKSEPFLTWL (179 aa). Serine 295 and serine 311 each carry phosphoserine. The PDZ-binding motif lies at 394 to 400; sequence EPFLTWL.

As to quaternary structure, binds to SLC9A3R2 via the PDZ motif at the plasma membrane. Binds to YWHAZ in vivo and in vitro through the phosphoserine-binding motif RSHSSP. Interacts (via coiled-coil domain) with SMAD2 (via MH1 domain), SMAD3 and SMAD4. Interacts with MED15. Interacts with PAX8 and NKX2-1. Interacts with TEAD1, TEAD2, TEAD3 and TEAD4. Interacts (via WW domain) with PALS1. Interacts with LATS1. Interacts with YAP1 (when phosphorylated at 'Ser-112'). Interacts (via WW domain) with PRRG4 (via cytoplasmic domain). Interacts (via WW domain) with AMOTL2 (via PPXY motif); the interaction promotes WWTR1/TAZ localization to the cytoplasm and tight junctions, thereby inhibiting its transcriptional coactivator properties. Interacts (via WW domain) with AMOT; the interaction facilitates translocation of WWTR1/TAZ to the cytoplasm. Post-translationally, phosphorylated by LATS2 and STK3/MST2. Phosphorylation by LATS2 results in creation of 14-3-3 binding sites, retention in the cytoplasm, and functional inactivation. Phosphorylation results in the inhibition of transcriptional coactivation through YWHAZ-mediated nuclear export. In terms of processing, ubiquitinated at Lys-46; leading to proteasomal degradation. Deubiquitinated and stabilized by UCHL1 at Lys-46; leading to inhibition of osteoclastogenesis.

Its subcellular location is the cytoplasm. The protein resides in the nucleus. It is found in the cell membrane. The protein localises to the cell junction. It localises to the tight junction. Transcriptional coactivator which acts as a downstream regulatory target in the Hippo signaling pathway that plays a pivotal role in organ size control and tumor suppression by restricting proliferation and promoting apoptosis. The core of this pathway is composed of a kinase cascade wherein STK3/MST2 and STK4/MST1, in complex with its regulatory protein SAV1, phosphorylates and activates LATS1/2 in complex with its regulatory protein MOB1, which in turn phosphorylates and inactivates YAP1 oncoprotein and WWTR1/TAZ. WWTR1 enhances PAX8 and NKX2-1/TTF1-dependent gene activation. In conjunction with YAP1, involved in the regulation of TGFB1-dependent SMAD2 and SMAD3 nuclear accumulation. Plays a key role in coupling SMADs to the transcriptional machinery such as the mediator complex. Regulates embryonic stem-cell self-renewal, promotes cell proliferation and epithelial-mesenchymal transition. The polypeptide is WW domain-containing transcription regulator protein 1 (Canis lupus familiaris (Dog)).